Consider the following 289-residue polypeptide: 4-hydroxybenzoate octaprenyltransferase (289 aa).

Helical transmembrane passes span 22 to 42, 45 to 65, 96 to 116, 118 to 138, 140 to 160, 164 to 184, 211 to 231, 236 to 256, and 267 to 287; these read AGWL…SHGF, WHLV…GCCI, LGLG…TNAV, IAWS…KRYV, MPQA…FAAV, VPPL…AYDT, VAGV…ALIQ, AIFM…GWLI, and AFRL…LSYW.

It belongs to the UbiA prenyltransferase family. Mg(2+) serves as cofactor.

It localises to the cell inner membrane. It carries out the reaction all-trans-octaprenyl diphosphate + 4-hydroxybenzoate = 4-hydroxy-3-(all-trans-octaprenyl)benzoate + diphosphate. It functions in the pathway cofactor biosynthesis; ubiquinone biosynthesis. In terms of biological role, catalyzes the prenylation of para-hydroxybenzoate (PHB) with an all-trans polyprenyl group. Mediates the second step in the final reaction sequence of ubiquinone-8 (UQ-8) biosynthesis, which is the condensation of the polyisoprenoid side chain with PHB, generating the first membrane-bound Q intermediate 3-octaprenyl-4-hydroxybenzoate. The sequence is that of 4-hydroxybenzoate octaprenyltransferase from Polaromonas naphthalenivorans (strain CJ2).